A 592-amino-acid chain; its full sequence is Beta-xylosidase (592 aa).

The signal sequence occupies residues 1-19 (MYLNACRALTLISVLSLLA). C20 is lipidated: N-palmitoyl cysteine. C20 carries the S-diacylglycerol cysteine lipid modification.

This sequence belongs to the glycosyl hydrolase 43 family.

It is found in the cell outer membrane. Functionally, xylosidase involved in ulvan degradation. Ulvan is the main polysaccharide component of the Ulvales (green seaweed) cell wall. It is composed of disaccharide building blocks comprising 3-sulfated rhamnose (Rha3S) linked to D-glucuronic acid (GlcA), L-iduronic acid (IduA), or D-xylose (Xyl). Beta-xylosidase converts Xyl-Rha3S, a product of alpha-L-rhamnosidase acting on Rha-Xyl-Rha3S oligosaccharides, further to Xyl and Rha3S. This Formosa agariphila (strain DSM 15362 / KCTC 12365 / LMG 23005 / KMM 3901 / M-2Alg 35-1) protein is Beta-xylosidase.